Consider the following 214-residue polypeptide: Adenylate kinase (214 aa).

10–15 lines the ATP pocket; the sequence is GAGKGT. Positions 30 to 59 are NMP; sequence STGDIFRANIKGNTPLGQKAKEYMDKGELV. Residues Thr31, Arg36, 57–59, 85–88, and Gln92 contribute to the AMP site; these read ELV and GFPR. An LID region spans residues 126–163; it reads GRRVCTNCGATYNVVFNPTKVEGICDVCNSPVIQRADD. Arg127 serves as a coordination point for ATP. Zn(2+) is bound by residues Cys130 and Cys133. 136-137 lines the ATP pocket; that stretch reads TY. Residues Cys150 and Cys153 each coordinate Zn(2+). Residues Arg160 and Arg171 each coordinate AMP. Residue Gly199 participates in ATP binding.

This sequence belongs to the adenylate kinase family. In terms of assembly, monomer.

The protein localises to the cytoplasm. It catalyses the reaction AMP + ATP = 2 ADP. It functions in the pathway purine metabolism; AMP biosynthesis via salvage pathway; AMP from ADP: step 1/1. Catalyzes the reversible transfer of the terminal phosphate group between ATP and AMP. Plays an important role in cellular energy homeostasis and in adenine nucleotide metabolism. In Ruminiclostridium cellulolyticum (strain ATCC 35319 / DSM 5812 / JCM 6584 / H10) (Clostridium cellulolyticum), this protein is Adenylate kinase.